A 671-amino-acid polypeptide reads, in one-letter code: Transcription factor xilB (671 aa).

Residues C11–C46 constitute a DNA-binding region (zn(2)-C6 fungal-type). The interval Y48 to H90 is disordered. Residues G49–P62 show a composition bias toward pro residues. The span at R77–H90 shows a compositional bias: basic and acidic residues. The segment at P148–Q593 is fungal transcription factor domain. The tract at residues W629–D650 is disordered.

It localises to the nucleus. Transcription factor; part of the gene cluster that mediates the biosynthesis of the 6-methyl-2-pyrone derivative xylariolide D. May play a role in the regulation of the expression of the highly reducing polyketide synthase xilA and the cytochroe P450 monooxygenase xilC. This Penicillium rubens (strain ATCC 28089 / DSM 1075 / NRRL 1951 / Wisconsin 54-1255) (Penicillium chrysogenum) protein is Transcription factor xilB.